A 986-amino-acid chain; its full sequence is Ankyrin repeat, PH and SEC7 domain containing protein secG (986 aa).

Positions 1 to 28 (MGSTSNSTKNTGSTTTTTTTAAPATTAK) are enriched in low complexity. A disordered region spans residues 1-43 (MGSTSNSTKNTGSTTTTTTTAAPATTAKHSNSAPTRPSVHYYS). Positions 29 to 43 (HSNSAPTRPSVHYYS) are enriched in polar residues. ANK repeat units lie at residues 34–63 (PTRPSVHYYSSTGDIEKLSNLLNNSATSPD), 68–97 (EKRTPLHHAAFCGSAACVNFLLDKKANANI), 101–131 (AGNTPLQWASSRGHLECIKLLVEKGGVDVNT), 135–164 (KNGTPLHKASLFASAECVLYLLNGKADPRA), 168–197 (NGETPLHHASAGGNPQCVELLIKADSKVNA), 201–230 (DCITPLHQASFSGHSSCVSLLLKKGAKVDP), 234–263 (HGISPLHNAASAGYVDCVEQLVRNGENINC), 267–296 (EGVTPLHHTCFNGNLQLTKRLIELGAKINM), 300–329 (MGETPLHKAAFNGHKEVCEYLLYLDPTMID), 334–363 (RQSTSLHLAAFNGLLDMVDLLIRYKAQINI), 367–396 (EGATPLHKASFNGHSSCAKLLVDKGAPICI), 400–429 (QGATPLHKAAFNGRSKCLATLIRSGAELEV), 433–462 (QGGTPLHNAAYNGHSDCCRILLKKGANVNA), 466–495 (HSSTPLHLASAAGARDTVDVLIQFKARIDA), and 499–528 (AGKTPLVYAIKKNHSDVARVLIRAGADLDQ). The SEC7 domain maps to 580–770 (QLAAEKQKLL…ENLYDKIVTN (191 aa)). Positions 784–895 (HVEKKGWLTK…WVQSIKSNIH (112 aa)) constitute a PH domain. The disordered stretch occupies residues 911 to 986 (IRGRGKVSTK…PVQQQTSALS (76 aa)). Over residues 920–929 (KPIQNRKQTI) the composition is skewed to polar residues. Composition is skewed to low complexity over residues 936-953 (TTTTTTSTASNNVTSVGS) and 963-986 (SSGSKPVTFSSTSSPVQQQTSALS).

This chain is Ankyrin repeat, PH and SEC7 domain containing protein secG (secG), found in Dictyostelium discoideum (Social amoeba).